The chain runs to 440 residues: Cyclic dipeptide prenyltransferase (440 aa).

The tract at residues 1 to 33 (MDGEMTASPPDISACDTSAVDEQTGQSGQSQAP) is disordered. A compositionally biased stretch (polar residues) spans 20 to 32 (VDEQTGQSGQSQA). The substrate site is built by Thr108 and Glu116. Dimethylallyl diphosphate-binding residues include Arg129, Lys219, and Tyr221. Phe223 provides a ligand contact to substrate. Residues Lys286, Tyr288, Tyr366, Tyr431, and Tyr435 each coordinate dimethylallyl diphosphate.

It belongs to the tryptophan dimethylallyltransferase family.

The enzyme catalyses harmol + dimethylallyl diphosphate = 6-(3-dimethylallyl)harmol + diphosphate. The catalysed reaction is an N-terminal L-tryptophanyl-L-alpha-aminoacyl-[peptide] + H2O = an N-terminal L-alpha-aminoacyl-[peptide] + L-tryptophan. It catalyses the reaction (R)-benzodiazepinedione + dimethylallyl diphosphate = (2S,3R,11R)-aszonalenin + diphosphate. It carries out the reaction (S)-benzodiazepinedione + dimethylallyl diphosphate = (2S,3R,11S)-aszonalenin + diphosphate. Its function is as follows. Prenyltransferase that catalyzes reverse prenylation at position N-1 of tryptophan-containing cyclic dipeptides. Accepts only dimethylallyl diphosphate (DMAPP) as the prenyl donor but shows broad substrate specificities toward its aromatic substrates. Also shows tryptophan aminopeptidase activity with preference for linear peptides containing a tryptophanyl moiety at the N-terminus. This is Cyclic dipeptide prenyltransferase from Aspergillus fumigatus (Neosartorya fumigata).